We begin with the raw amino-acid sequence, 137 residues long: Ribonuclease P protein component (137 aa).

The protein belongs to the RnpA family. As to quaternary structure, consists of a catalytic RNA component (M1 or rnpB) and a protein subunit.

The enzyme catalyses Endonucleolytic cleavage of RNA, removing 5'-extranucleotides from tRNA precursor.. In terms of biological role, RNaseP catalyzes the removal of the 5'-leader sequence from pre-tRNA to produce the mature 5'-terminus. It can also cleave other RNA substrates such as 4.5S RNA. The protein component plays an auxiliary but essential role in vivo by binding to the 5'-leader sequence and broadening the substrate specificity of the ribozyme. This is Ribonuclease P protein component from Porphyromonas gingivalis (strain ATCC BAA-308 / W83).